A 264-amino-acid chain; its full sequence is Glutamate racemase (264 aa).

Residues 10 to 11 and 42 to 43 contribute to the substrate site; these read DS and YG. Residue Cys73 is the Proton donor/acceptor of the active site. 74 to 75 provides a ligand contact to substrate; it reads NT. The Proton donor/acceptor role is filled by Cys183. 184–185 is a substrate binding site; it reads TH.

This sequence belongs to the aspartate/glutamate racemases family.

It carries out the reaction L-glutamate = D-glutamate. The protein operates within cell wall biogenesis; peptidoglycan biosynthesis. Functionally, provides the (R)-glutamate required for cell wall biosynthesis. The protein is Glutamate racemase of Streptococcus mutans serotype c (strain ATCC 700610 / UA159).